Consider the following 295-residue polypeptide: UDP-N-acetylenolpyruvoylglucosamine reductase (295 aa).

An FAD-binding PCMH-type domain is found at 23-188 (KVGGPADFLA…ISAKFALKPG (166 aa)). Arg-167 is a catalytic residue. Ser-217 (proton donor) is an active-site residue. Glu-287 is a catalytic residue.

This sequence belongs to the MurB family. It depends on FAD as a cofactor.

It localises to the cytoplasm. The enzyme catalyses UDP-N-acetyl-alpha-D-muramate + NADP(+) = UDP-N-acetyl-3-O-(1-carboxyvinyl)-alpha-D-glucosamine + NADPH + H(+). It participates in cell wall biogenesis; peptidoglycan biosynthesis. Functionally, cell wall formation. The polypeptide is UDP-N-acetylenolpyruvoylglucosamine reductase (Streptococcus pyogenes serotype M1).